Reading from the N-terminus, the 362-residue chain is Probable dual-specificity RNA methyltransferase RlmN (362 aa).

The active-site Proton acceptor is E105. Residues 111-344 (HEYGNSICVT…VTIRREQGHD (234 aa)) enclose the Radical SAM core domain. An intrachain disulfide couples C118 to C349. Positions 125, 129, and 132 each coordinate [4Fe-4S] cluster. S-adenosyl-L-methionine contacts are provided by residues 175 to 176 (GE), S207, 230 to 232 (SLH), and N306. C349 (S-methylcysteine intermediate) is an active-site residue.

This sequence belongs to the radical SAM superfamily. RlmN family. Requires [4Fe-4S] cluster as cofactor.

The protein resides in the cytoplasm. It carries out the reaction adenosine(2503) in 23S rRNA + 2 reduced [2Fe-2S]-[ferredoxin] + 2 S-adenosyl-L-methionine = 2-methyladenosine(2503) in 23S rRNA + 5'-deoxyadenosine + L-methionine + 2 oxidized [2Fe-2S]-[ferredoxin] + S-adenosyl-L-homocysteine. It catalyses the reaction adenosine(37) in tRNA + 2 reduced [2Fe-2S]-[ferredoxin] + 2 S-adenosyl-L-methionine = 2-methyladenosine(37) in tRNA + 5'-deoxyadenosine + L-methionine + 2 oxidized [2Fe-2S]-[ferredoxin] + S-adenosyl-L-homocysteine. In terms of biological role, specifically methylates position 2 of adenine 2503 in 23S rRNA and position 2 of adenine 37 in tRNAs. This is Probable dual-specificity RNA methyltransferase RlmN from Bacillus cereus (strain G9842).